The sequence spans 390 residues: Lipoyl synthase, mitochondrial (390 aa).

The transit peptide at 1–19 (MPTLLRILRPPRSPFTRCL) directs the protein to the mitochondrion. The disordered stretch occupies residues 23–48 (ATPSSSGSSSRSKFTESLETGPGLDD). Residues Cys-98, Cys-103, Cys-109, Cys-136, Cys-140, Cys-143, and Ser-350 each coordinate [4Fe-4S] cluster. Residues 119–339 (AEGRSAATAT…KEVAENLGFL (221 aa)) enclose the Radical SAM core domain.

Belongs to the radical SAM superfamily. Lipoyl synthase family. [4Fe-4S] cluster is required as a cofactor.

The protein localises to the mitochondrion. It carries out the reaction [[Fe-S] cluster scaffold protein carrying a second [4Fe-4S](2+) cluster] + N(6)-octanoyl-L-lysyl-[protein] + 2 oxidized [2Fe-2S]-[ferredoxin] + 2 S-adenosyl-L-methionine + 4 H(+) = [[Fe-S] cluster scaffold protein] + N(6)-[(R)-dihydrolipoyl]-L-lysyl-[protein] + 4 Fe(3+) + 2 hydrogen sulfide + 2 5'-deoxyadenosine + 2 L-methionine + 2 reduced [2Fe-2S]-[ferredoxin]. It functions in the pathway protein modification; protein lipoylation via endogenous pathway; protein N(6)-(lipoyl)lysine from octanoyl-[acyl-carrier-protein]: step 2/2. In terms of biological role, catalyzes the radical-mediated insertion of two sulfur atoms into the C-6 and C-8 positions of the octanoyl moiety bound to the lipoyl domains of lipoate-dependent enzymes, thereby converting the octanoylated domains into lipoylated derivatives. This Laccaria bicolor (strain S238N-H82 / ATCC MYA-4686) (Bicoloured deceiver) protein is Lipoyl synthase, mitochondrial.